Here is a 286-residue protein sequence, read N- to C-terminus: Protein HEXIM2 (286 aa).

The segment covering 1–11 has biased composition (polar residues); it reads MMATPNQTACN. The interval 1-195 is disordered; sequence MMATPNQTAC…GEFQRKDFSE (195 aa). Position 29 is a phosphoserine (S29). The residue at position 32 (T32) is a Phosphothreonine. A Phosphoserine modification is found at S39. T46 carries the post-translational modification Phosphothreonine. Phosphoserine is present on residues S51, S53, S71, S76, and S81. The span at 68 to 78 shows a compositional bias: polar residues; the sequence is NSRSPRTQSPG. The segment covering 87-103 has biased composition (basic residues); that stretch reads ARKKHRRRPSKRKRHWR. Residues 113–132 are compositionally biased toward basic and acidic residues; the sequence is KQQRDERQSQRASRVREEMF. The interval 140 to 143 is interaction with P-TEFb; sequence PYNT. Positions 178-195 are enriched in basic and acidic residues; it reads SDGRGRAHGEFQRKDFSE. The stretch at 207 to 277 forms a coiled coil; it reads GRSKQELVRD…QENQMWNREG (71 aa). Positions 226–286 are interaction with CCNT1, HEXIM1 and HEXIM2; that stretch reads QAEEETRRLQ…GCRCDEEPGT (61 aa).

This sequence belongs to the HEXIM family. In terms of assembly, homooligomer and heterooligomer with HEXIM1; probably dimeric. Core component of the 7SK RNP complex, at least composed of 7SK RNA, LARP7, MEPCE, HEXIM1 (or HEXIM2) and P-TEFb (composed of CDK9 and CCNT1/cyclin-T1). Interacts with CCNT2. In terms of tissue distribution, ubiquitously expressed with higher expression in testis. HEXIM1 and HEXIM2 are differentially expressed.

The protein resides in the nucleus. Its function is as follows. Transcriptional regulator which functions as a general RNA polymerase II transcription inhibitor. Core component of the 7SK RNP complex: in cooperation with 7SK snRNA sequesters P-TEFb in a large inactive 7SK snRNP complex preventing RNA polymerase II phosphorylation and subsequent transcriptional elongation. The chain is Protein HEXIM2 (HEXIM2) from Homo sapiens (Human).